We begin with the raw amino-acid sequence, 438 residues long: tRNA(Ile)-lysidine synthase (438 aa).

19-24 (SGGIDS) is an ATP binding site.

This sequence belongs to the tRNA(Ile)-lysidine synthase family.

It localises to the cytoplasm. The enzyme catalyses cytidine(34) in tRNA(Ile2) + L-lysine + ATP = lysidine(34) in tRNA(Ile2) + AMP + diphosphate + H(+). Its function is as follows. Ligates lysine onto the cytidine present at position 34 of the AUA codon-specific tRNA(Ile) that contains the anticodon CAU, in an ATP-dependent manner. Cytidine is converted to lysidine, thus changing the amino acid specificity of the tRNA from methionine to isoleucine. In Buchnera aphidicola subsp. Baizongia pistaciae (strain Bp), this protein is tRNA(Ile)-lysidine synthase.